The sequence spans 659 residues: Putative oxidoreductase AegA (659 aa).

4Fe-4S ferredoxin-type domains are found at residues R3 to C22, H47 to D77, D78 to T107, V114 to D147, and D218 to L252. Residues C12, C15, C18, C22, C56, C59, C64, C68, C87, C90, C93, C97, C121, C124, C133, C137, C227, C230, C236, and C240 each contribute to the [4Fe-4S] cluster site.

[4Fe-4S] cluster serves as cofactor.

Functionally, involved in formate-dependent uric acid degradation under microaerobic and anaerobic conditions. May reduce the enzymes necessary for uric acid degradation. The chain is Putative oxidoreductase AegA from Escherichia coli (strain K12).